We begin with the raw amino-acid sequence, 105 residues long: Large ribosomal subunit protein uL24 (105 aa).

The protein belongs to the universal ribosomal protein uL24 family. Part of the 50S ribosomal subunit.

One of two assembly initiator proteins, it binds directly to the 5'-end of the 23S rRNA, where it nucleates assembly of the 50S subunit. Functionally, one of the proteins that surrounds the polypeptide exit tunnel on the outside of the subunit. This Methylobacterium sp. (strain 4-46) protein is Large ribosomal subunit protein uL24.